Reading from the N-terminus, the 412-residue chain is uncharacterized protein (412 aa).

Zn(2+) is bound at residue H49. E52 functions as the Proton acceptor in the catalytic mechanism. Residues H53 and E129 each contribute to the Zn(2+) site.

This sequence belongs to the peptidase M16 family. Zn(2+) is required as a cofactor.

This is an uncharacterized protein from Rickettsia felis (strain ATCC VR-1525 / URRWXCal2) (Rickettsia azadi).